A 288-amino-acid polypeptide reads, in one-letter code: MFTRIALFLATNLAVLILASIVMSLLGVDSRSMSGLLVMAGIFGFGGSFISLLLSKWMAKRSTGAVVITEPRNQTERWLLATVERQAKAAGIGMPEVAVYEGPEINAFATGANRNNALVAVSTGLLHNMSEDEAEAVLGHEIAHVANGDMITMALLQGVLNTFVIVLARVVGGIIDSALSGNREGGGRGFAYFIIVFVLEMVFGLFATMISMWFSRHREFRADAGGASLAGRQKMIAALERLQLNHGQSTLPTQIAAFGIAGSTAKKLFMSHPPLEERIAALRASTVA.

2 consecutive transmembrane segments (helical) span residues 5–25 (IALF…VMSL) and 34–54 (SGLL…SLLL). Zn(2+) is bound at residue His140. Glu141 is a catalytic residue. His144 provides a ligand contact to Zn(2+). Helical transmembrane passes span 155-175 (LLQG…GGII) and 190-210 (FAYF…ATMI). Glu219 is a binding site for Zn(2+).

This sequence belongs to the peptidase M48B family. It depends on Zn(2+) as a cofactor.

It localises to the cell inner membrane. The protein is Protease HtpX of Stenotrophomonas maltophilia (strain R551-3).